The sequence spans 263 residues: Hydroxyethylthiazole kinase (263 aa).

Residue M45 participates in substrate binding. ATP contacts are provided by R121 and S167. G194 contributes to the substrate binding site.

Belongs to the Thz kinase family. It depends on Mg(2+) as a cofactor.

It catalyses the reaction 5-(2-hydroxyethyl)-4-methylthiazole + ATP = 4-methyl-5-(2-phosphooxyethyl)-thiazole + ADP + H(+). It functions in the pathway cofactor biosynthesis; thiamine diphosphate biosynthesis; 4-methyl-5-(2-phosphoethyl)-thiazole from 5-(2-hydroxyethyl)-4-methylthiazole: step 1/1. Catalyzes the phosphorylation of the hydroxyl group of 4-methyl-5-beta-hydroxyethylthiazole (THZ). The protein is Hydroxyethylthiazole kinase of Vibrio campbellii (strain ATCC BAA-1116).